The primary structure comprises 196 residues: Histone H1.0-B (196 aa).

Disordered regions lie at residues 1 to 29 (MAEN…PKYS) and 86 to 196 (GVGA…GRKK). The region spanning 24–97 (DHPKYSDMIL…GASGSFRLAK (74 aa)) is the H15 domain. The span at 104-196 (PAKKPKKEIK…ASPKKSGRKK (93 aa)) shows a compositional bias: basic residues.

Belongs to the histone H1/H5 family.

The protein resides in the nucleus. Its subcellular location is the chromosome. Functionally, histones H1 are necessary for the condensation of nucleosome chains into higher-order structures. The histones H1.0 are found in cells that are in terminal stages of differentiation or that have low rates of cell division. The chain is Histone H1.0-B (h1-0-b) from Xenopus laevis (African clawed frog).